The sequence spans 299 residues: Biotin transporter (299 aa).

The next 10 membrane-spanning stretches (helical) occupy residues 2–22 (ALLI…GEYL), 26–46 (VDSY…FLPF), 56–76 (TVGL…MLSF), 81–101 (YLTV…ITLI), 110–130 (LRWG…IIRY), 137–157 (FWTG…GMVG), 172–192 (AFAW…FLLG), 202–222 (LQWG…YFMW), 233–253 (TLGI…LAIW), and 256–276 (QPHW…LWVH). 2 EamA domains span residues 3 to 128 (LLII…AGII) and 139 to 274 (TGLL…ASLW).

It belongs to the drug/metabolite transporter (DMT) superfamily. 10 TMS drug/metabolite exporter (DME) (TC 2.A.7.3) family.

It is found in the cell inner membrane. It catalyses the reaction biotin(in) = biotin(out). Functionally, uptake of biotin. This Escherichia coli O157:H7 protein is Biotin transporter.